We begin with the raw amino-acid sequence, 799 residues long: Zinc finger X-linked protein ZXDA (799 aa).

A disordered region spans residues 1 to 89 (MEIPKLLPAR…QPSGGGDDFF (89 aa)). The span at 13–26 (LQGGGGGGIPAGGG) shows a compositional bias: gly residues. 10 consecutive C2H2-type zinc fingers follow at residues 267-291 (YLCP…LLTH), 300-324 (FKCP…LQSH), 330-354 (FGCP…MKGH), 360-382 (FKCE…QRSH), 389-413 (YQCA…NRAH), 420-444 (FSCS…LRSH), 450-474 (FLCD…KRKH), 480-504 (FMCP…SITH), 510-534 (FVCP…SKKH), and 543-568 (SRCP…VKRH). The interval 267–573 (YLCPEALCGQ…MVKRHKVGQD (307 aa)) is required for interaction with ZXDC. Residues 572–699 (QDLLAQLEAA…NMDEVSSVSV (128 aa)) form a required for transcriptional activation region.

This sequence belongs to the ZXD family. Self-associates. Interacts with ZXDC and CIITA. In terms of tissue distribution, may be expressed in brain, heart, kidney, liver, lung, muscle and placenta.

It localises to the nucleus. Cooperates with CIITA to promote transcription of MHC class I and MHC class II genes. The protein is Zinc finger X-linked protein ZXDA (ZXDA) of Homo sapiens (Human).